The primary structure comprises 331 residues: Peroxidase 69 (331 aa).

Residues 1–23 form the signal peptide; the sequence is MGRGYNLLFVLVTFLVLVAAVTA. 4 cysteine pairs are disulfide-bonded: Cys-46–Cys-122, Cys-79–Cys-84, Cys-128–Cys-327, and Cys-205–Cys-237. His-77 acts as the Proton acceptor in catalysis. 5 residues coordinate Ca(2+): Asp-78, Val-81, Gly-83, Asp-85, and Ser-87. Asn-93 carries N-linked (GlcNAc...) asparagine glycosylation. Pro-168 is a binding site for substrate. Position 198 (His-198) interacts with heme b. Thr-199 contributes to the Ca(2+) binding site. Asn-216 carries N-linked (GlcNAc...) asparagine glycosylation. 3 residues coordinate Ca(2+): Asp-248, Ser-251, and Asp-256.

The protein belongs to the peroxidase family. Classical plant (class III) peroxidase subfamily. It depends on heme b as a cofactor. Ca(2+) is required as a cofactor. Mainly expressed in roots and slightly in leaves.

The protein resides in the secreted. The catalysed reaction is 2 a phenolic donor + H2O2 = 2 a phenolic radical donor + 2 H2O. Functionally, removal of H(2)O(2), oxidation of toxic reductants, biosynthesis and degradation of lignin, suberization, auxin catabolism, response to environmental stresses such as wounding, pathogen attack and oxidative stress. These functions might be dependent on each isozyme/isoform in each plant tissue. This Arabidopsis thaliana (Mouse-ear cress) protein is Peroxidase 69 (PER69).